The following is a 144-amino-acid chain: Large ribosomal subunit protein uL15 (144 aa).

A disordered region spans residues 1–54 (MRLNTLSPAEGSKKAGKRLGRGIGSGLGKTGGRGHKGQKSRSGGGVRRGFEGGQ). Residues 21-31 (RGIGSGLGKTG) show a composition bias toward gly residues.

It belongs to the universal ribosomal protein uL15 family. As to quaternary structure, part of the 50S ribosomal subunit.

Binds to the 23S rRNA. The sequence is that of Large ribosomal subunit protein uL15 from Klebsiella pneumoniae (strain 342).